A 224-amino-acid polypeptide reads, in one-letter code: Oxalate oxidase GF-2.8 (224 aa).

The first 23 residues, 1–23 (MGYSKTLVAGLFAMLLLAPAVLA), serve as a signal peptide directing secretion. A disulfide bridge links Cys33 with Cys49. Residues 63–214 (SKLAKAGNTS…ALRVEARVVE (152 aa)) form the Cupin type-1 domain. Asn70 and Asn75 each carry an N-linked (GlcNAc...) asparagine glycan. Residues His111, His113, Glu118, and His160 each coordinate Mn(2+).

This sequence belongs to the germin family. In terms of assembly, oligomer (believed to be a pentamer but probably hexamer).

The protein resides in the secreted. It is found in the extracellular space. Its subcellular location is the apoplast. It localises to the cytoplasm. The protein localises to the cell wall. The catalysed reaction is oxalate + O2 + 2 H(+) = H2O2 + 2 CO2. Its function is as follows. Produces developmental and stress-related release of hydrogen peroxide in the apoplast. May play an important role in several aspects of plant growth and defense mechanisms. The sequence is that of Oxalate oxidase GF-2.8 from Triticum aestivum (Wheat).